Consider the following 745-residue polypeptide: Phosphoribosylformylglycinamidine synthase subunit PurL (745 aa).

His47 is an active-site residue. Tyr50 and Lys90 together coordinate ATP. A Mg(2+)-binding site is contributed by Glu92. Substrate contacts are provided by residues 93–96 (SHNH) and Arg115. His94 serves as the catalytic Proton acceptor. Position 116 (Asp116) interacts with Mg(2+). Gln240 provides a ligand contact to substrate. A Mg(2+)-binding site is contributed by Asp268. Residue 312-314 (ESQ) participates in substrate binding. Positions 501 and 538 each coordinate ATP. Mg(2+) is bound at residue Asn539. Ser541 is a substrate binding site.

It belongs to the FGAMS family. Monomer. Part of the FGAM synthase complex composed of 1 PurL, 1 PurQ and 2 PurS subunits.

The protein resides in the cytoplasm. The enzyme catalyses N(2)-formyl-N(1)-(5-phospho-beta-D-ribosyl)glycinamide + L-glutamine + ATP + H2O = 2-formamido-N(1)-(5-O-phospho-beta-D-ribosyl)acetamidine + L-glutamate + ADP + phosphate + H(+). Its pathway is purine metabolism; IMP biosynthesis via de novo pathway; 5-amino-1-(5-phospho-D-ribosyl)imidazole from N(2)-formyl-N(1)-(5-phospho-D-ribosyl)glycinamide: step 1/2. Functionally, part of the phosphoribosylformylglycinamidine synthase complex involved in the purines biosynthetic pathway. Catalyzes the ATP-dependent conversion of formylglycinamide ribonucleotide (FGAR) and glutamine to yield formylglycinamidine ribonucleotide (FGAM) and glutamate. The FGAM synthase complex is composed of three subunits. PurQ produces an ammonia molecule by converting glutamine to glutamate. PurL transfers the ammonia molecule to FGAR to form FGAM in an ATP-dependent manner. PurS interacts with PurQ and PurL and is thought to assist in the transfer of the ammonia molecule from PurQ to PurL. The protein is Phosphoribosylformylglycinamidine synthase subunit PurL of Leptospira interrogans serogroup Icterohaemorrhagiae serovar Lai (strain 56601).